The sequence spans 123 residues: Small ribosomal subunit protein uS13 (123 aa).

Residues 94 to 123 (GLPVRGQSTKSNARTRKGPRKTVAGKKSTK) are disordered. Basic residues predominate over residues 106–123 (ARTRKGPRKTVAGKKSTK).

Belongs to the universal ribosomal protein uS13 family. In terms of assembly, part of the 30S ribosomal subunit. Forms a loose heterodimer with protein S19. Forms two bridges to the 50S subunit in the 70S ribosome.

Its function is as follows. Located at the top of the head of the 30S subunit, it contacts several helices of the 16S rRNA. In the 70S ribosome it contacts the 23S rRNA (bridge B1a) and protein L5 of the 50S subunit (bridge B1b), connecting the 2 subunits; these bridges are implicated in subunit movement. Contacts the tRNAs in the A and P-sites. The chain is Small ribosomal subunit protein uS13 from Mycoplasmopsis agalactiae (strain NCTC 10123 / CIP 59.7 / PG2) (Mycoplasma agalactiae).